A 166-amino-acid polypeptide reads, in one-letter code: Orofacial cleft 1 candidate gene 1 protein homolog (166 aa).

The segment at 1-22 (MDKEKFQQKAVKQTKQKKSTSA) is disordered.

The polypeptide is Orofacial cleft 1 candidate gene 1 protein homolog (Ofcc1) (Mus musculus (Mouse)).